The sequence spans 363 residues: DNA replication and repair protein RecF (363 aa).

30–37 (GNNAQGKT) is a binding site for ATP.

Belongs to the RecF family.

The protein resides in the cytoplasm. In terms of biological role, the RecF protein is involved in DNA metabolism; it is required for DNA replication and normal SOS inducibility. RecF binds preferentially to single-stranded, linear DNA. It also seems to bind ATP. This chain is DNA replication and repair protein RecF, found in Clostridium acetobutylicum (strain ATCC 824 / DSM 792 / JCM 1419 / IAM 19013 / LMG 5710 / NBRC 13948 / NRRL B-527 / VKM B-1787 / 2291 / W).